We begin with the raw amino-acid sequence, 318 residues long: Ribosomal RNA small subunit methyltransferase H (318 aa).

S-adenosyl-L-methionine is bound by residues 35-37 (GGH), D54, F83, D104, and Q111.

This sequence belongs to the methyltransferase superfamily. RsmH family.

Its subcellular location is the cytoplasm. The enzyme catalyses cytidine(1402) in 16S rRNA + S-adenosyl-L-methionine = N(4)-methylcytidine(1402) in 16S rRNA + S-adenosyl-L-homocysteine + H(+). Functionally, specifically methylates the N4 position of cytidine in position 1402 (C1402) of 16S rRNA. The protein is Ribosomal RNA small subunit methyltransferase H of Latilactobacillus sakei subsp. sakei (strain 23K) (Lactobacillus sakei subsp. sakei).